The chain runs to 127 residues: MHLAVTALCLTLAPVLARASTSCGLANISISVENEECGGCITFNTTACAGLCFTQDSVYKSSLKSYPQQACNFRDVVYETVHLPGCPSGMDLHFTYPVALSCECSKCNTDSTDCGPLNTEVSGCLTH.

Residues 1 to 22 form the signal peptide; the sequence is MHLAVTALCLTLAPVLARASTS. Cystine bridges form between Cys-23/Cys-71, Cys-37/Cys-86, Cys-40/Cys-124, Cys-48/Cys-102, Cys-52/Cys-104, and Cys-107/Cys-114. N-linked (GlcNAc...) asparagine glycans are attached at residues Asn-27 and Asn-44.

This sequence belongs to the glycoprotein hormones subunit beta family. In terms of assembly, heterodimer of an alpha and a beta chain.

The protein resides in the secreted. Involved in gametogenesis and steroidogenesis. This chain is Gonadotropin subunit beta-1 (cgba), found in Anguilla japonica (Japanese eel).